We begin with the raw amino-acid sequence, 486 residues long: CUGBP Elav-like family member 5 (486 aa).

A compositionally biased stretch (basic and acidic residues) spans 1 to 11 (MARLTEREARR). The tract at residues 1 to 39 (MARLTEREARRQQQQHPPQQQQPRACPMSGPEPPAQQSD) is disordered. Residues 12–24 (QQQQHPPQQQQPR) are compositionally biased toward low complexity. RRM domains follow at residues 47–128 (IKLF…PADS), 135–215 (RKLF…FADT), and 401–479 (CNLF…LKRP).

The protein belongs to the CELF/BRUNOL family.

The protein localises to the nucleus. Its subcellular location is the cytoplasm. In terms of biological role, RNA-binding protein that may be implicated in the regulation of pre-mRNA alternative splicing. This Xenopus tropicalis (Western clawed frog) protein is CUGBP Elav-like family member 5 (celf5).